The following is a 240-amino-acid chain: Probable 2-phosphosulfolactate phosphatase (240 aa).

This sequence belongs to the ComB family. Mg(2+) is required as a cofactor.

It carries out the reaction (2R)-O-phospho-3-sulfolactate + H2O = (2R)-3-sulfolactate + phosphate. This chain is Probable 2-phosphosulfolactate phosphatase, found in Clostridium kluyveri (strain NBRC 12016).